The chain runs to 158 residues: Ankyrin repeat domain-containing protein 37 (158 aa).

3 ANK repeats span residues 1 to 25 (MLLLDCNPEVDGLKHLLETGASVNA), 30 to 59 (CKQSPVHLAAGSGLACFLLWQLQTGADLNQ), and 63 to 92 (LGEAPLHKAAKVGSLECLSLLVASDAQIDL). The Nuclear localization signal motif lies at 129-149 (EHPDRNDCVAVLRQKRSLGSV).

In terms of processing, ubiquitinated by the CRL2(FEM1B) complex, leading to its degradation. In terms of tissue distribution, mainly expressed in testis, small intestine, colon, blood leukocytes and in pancreatic adenocarcinoma cells.

The protein localises to the nucleus. It is found in the cytoplasm. This Homo sapiens (Human) protein is Ankyrin repeat domain-containing protein 37.